The primary structure comprises 286 residues: 3-hydroxyanthranilate 3,4-dioxygenase (286 aa).

The segment at 1–160 (MERRLGVRAW…SEQYRTGKPI (160 aa)) is domain A (catalytic). O2 is bound at residue Arg-43. Residues His-47, Glu-53, and His-91 each contribute to the Fe cation site. Glu-53 serves as a coordination point for substrate. Residues Arg-95 and Glu-105 each contribute to the substrate site. The linker stretch occupies residues 161–177 (PDQLLKEPPFPLSTRSI). Residues 178–286 (MEPMSLDAWL…QDPACKKPLG (109 aa)) are domain B.

Belongs to the 3-HAO family. As to quaternary structure, monomer. It depends on Fe(2+) as a cofactor.

It is found in the cytoplasm. The protein localises to the cytosol. The catalysed reaction is 3-hydroxyanthranilate + O2 = (2Z,4Z)-2-amino-3-carboxymuconate 6-semialdehyde. It participates in cofactor biosynthesis; NAD(+) biosynthesis; quinolinate from L-kynurenine: step 3/3. Its function is as follows. Catalyzes the oxidative ring opening of 3-hydroxyanthranilate to 2-amino-3-carboxymuconate semialdehyde, which spontaneously cyclizes to quinolinate. The chain is 3-hydroxyanthranilate 3,4-dioxygenase from Homo sapiens (Human).